We begin with the raw amino-acid sequence, 1097 residues long: DNA-directed RNA polymerase subunit beta (1097 aa).

The segment at 1073-1097 (DVNPRRSTPSRPTYESLGVADYDED) is disordered.

Belongs to the RNA polymerase beta chain family. In cyanobacteria the RNAP catalytic core is composed of 2 alpha, 1 beta, 1 beta', 1 gamma and 1 omega subunit. When a sigma factor is associated with the core the holoenzyme is formed, which can initiate transcription.

The enzyme catalyses RNA(n) + a ribonucleoside 5'-triphosphate = RNA(n+1) + diphosphate. Its function is as follows. DNA-dependent RNA polymerase catalyzes the transcription of DNA into RNA using the four ribonucleoside triphosphates as substrates. This chain is DNA-directed RNA polymerase subunit beta, found in Synechococcus sp. (strain RCC307).